A 259-amino-acid polypeptide reads, in one-letter code: Bis(5'-nucleosyl)-tetraphosphatase, symmetrical (259 aa).

Belongs to the Ap4A hydrolase family.

It carries out the reaction P(1),P(4)-bis(5'-adenosyl) tetraphosphate + H2O = 2 ADP + 2 H(+). In terms of biological role, hydrolyzes diadenosine 5',5'''-P1,P4-tetraphosphate to yield ADP. The protein is Bis(5'-nucleosyl)-tetraphosphatase, symmetrical (apaH) of Klebsiella aerogenes (Enterobacter aerogenes).